We begin with the raw amino-acid sequence, 203 residues long: Thymidine kinase (203 aa).

ATP contacts are provided by residues 9 to 16 and 87 to 90; these read ATMNAGKT and DEAQ. Glu-88 functions as the Proton acceptor in the catalytic mechanism. Residues Cys-145, Cys-147, Cys-181, and His-184 each coordinate Zn(2+).

The protein belongs to the thymidine kinase family. As to quaternary structure, homotetramer.

The protein resides in the cytoplasm. It carries out the reaction thymidine + ATP = dTMP + ADP + H(+). The sequence is that of Thymidine kinase from Mesorhizobium japonicum (strain LMG 29417 / CECT 9101 / MAFF 303099) (Mesorhizobium loti (strain MAFF 303099)).